Reading from the N-terminus, the 122-residue chain is Large ribosomal subunit protein uL14 (122 aa).

The protein belongs to the universal ribosomal protein uL14 family. Part of the 50S ribosomal subunit. Forms a cluster with proteins L3 and L19. In the 70S ribosome, L14 and L19 interact and together make contacts with the 16S rRNA in bridges B5 and B8.

In terms of biological role, binds to 23S rRNA. Forms part of two intersubunit bridges in the 70S ribosome. This Shewanella frigidimarina (strain NCIMB 400) protein is Large ribosomal subunit protein uL14.